A 264-amino-acid polypeptide reads, in one-letter code: S-adenosylmethionine decarboxylase proenzyme (264 aa).

The active-site Schiff-base intermediate with substrate; via pyruvic acid is the S112. Position 112 is a pyruvic acid (Ser); by autocatalysis (S112). The Proton acceptor; for processing activity role is filled by H117. C140 serves as the catalytic Proton donor; for catalytic activity.

This sequence belongs to the prokaryotic AdoMetDC family. Type 2 subfamily. In terms of assembly, heterooctamer of four alpha and four beta chains arranged as a tetramer of alpha/beta heterodimers. Pyruvate is required as a cofactor. Post-translationally, is synthesized initially as an inactive proenzyme. Formation of the active enzyme involves a self-maturation process in which the active site pyruvoyl group is generated from an internal serine residue via an autocatalytic post-translational modification. Two non-identical subunits are generated from the proenzyme in this reaction, and the pyruvate is formed at the N-terminus of the alpha chain, which is derived from the carboxyl end of the proenzyme. The post-translation cleavage follows an unusual pathway, termed non-hydrolytic serinolysis, in which the side chain hydroxyl group of the serine supplies its oxygen atom to form the C-terminus of the beta chain, while the remainder of the serine residue undergoes an oxidative deamination to produce ammonia and the pyruvoyl group blocking the N-terminus of the alpha chain.

The enzyme catalyses S-adenosyl-L-methionine + H(+) = S-adenosyl 3-(methylsulfanyl)propylamine + CO2. It functions in the pathway amine and polyamine biosynthesis; S-adenosylmethioninamine biosynthesis; S-adenosylmethioninamine from S-adenosyl-L-methionine: step 1/1. Catalyzes the decarboxylation of S-adenosylmethionine to S-adenosylmethioninamine (dcAdoMet), the propylamine donor required for the synthesis of the polyamines spermine and spermidine from the diamine putrescine. The sequence is that of S-adenosylmethionine decarboxylase proenzyme from Salmonella choleraesuis (strain SC-B67).